We begin with the raw amino-acid sequence, 346 residues long: tRNA/tmRNA (uracil-C(5))-methyltransferase (346 aa).

Positions 168, 197, 202, 218, and 278 each coordinate S-adenosyl-L-methionine. The Nucleophile role is filled by Cys303. Catalysis depends on Glu337, which acts as the Proton acceptor.

Belongs to the class I-like SAM-binding methyltransferase superfamily. RNA M5U methyltransferase family. TrmA subfamily.

It carries out the reaction uridine(54) in tRNA + S-adenosyl-L-methionine = 5-methyluridine(54) in tRNA + S-adenosyl-L-homocysteine + H(+). The enzyme catalyses uridine(341) in tmRNA + S-adenosyl-L-methionine = 5-methyluridine(341) in tmRNA + S-adenosyl-L-homocysteine + H(+). Its function is as follows. Dual-specificity methyltransferase that catalyzes the formation of 5-methyluridine at position 54 (m5U54) in all tRNAs, and that of position 341 (m5U341) in tmRNA (transfer-mRNA). This chain is tRNA/tmRNA (uracil-C(5))-methyltransferase, found in Campylobacter lari (strain RM2100 / D67 / ATCC BAA-1060).